The sequence spans 240 residues: 1-(5-phosphoribosyl)-5-[(5-phosphoribosylamino)methylideneamino] imidazole-4-carboxamide isomerase (240 aa).

The active-site Proton acceptor is Asp8. Asp129 (proton donor) is an active-site residue.

The protein belongs to the HisA/HisF family.

Its subcellular location is the cytoplasm. The enzyme catalyses 1-(5-phospho-beta-D-ribosyl)-5-[(5-phospho-beta-D-ribosylamino)methylideneamino]imidazole-4-carboxamide = 5-[(5-phospho-1-deoxy-D-ribulos-1-ylimino)methylamino]-1-(5-phospho-beta-D-ribosyl)imidazole-4-carboxamide. It participates in amino-acid biosynthesis; L-histidine biosynthesis; L-histidine from 5-phospho-alpha-D-ribose 1-diphosphate: step 4/9. This chain is 1-(5-phosphoribosyl)-5-[(5-phosphoribosylamino)methylideneamino] imidazole-4-carboxamide isomerase, found in Oceanobacillus iheyensis (strain DSM 14371 / CIP 107618 / JCM 11309 / KCTC 3954 / HTE831).